A 453-amino-acid polypeptide reads, in one-letter code: tRNA modification GTPase MnmE (453 aa).

Arginine 28, glutamate 90, and arginine 129 together coordinate (6S)-5-formyl-5,6,7,8-tetrahydrofolate. One can recognise a TrmE-type G domain in the interval 224–375 (GLRVAIIGRP…LSSALLKLCG (152 aa)). Residue asparagine 234 participates in K(+) binding. Residues 234–239 (NVGKSS), 253–259 (TDLPGTT), 278–281 (DTAG), and 356–358 (SAR) contribute to the GTP site. Mg(2+) is bound at residue serine 238. Threonine 253, leucine 255, and threonine 258 together coordinate K(+). Residue threonine 259 coordinates Mg(2+). Lysine 453 lines the (6S)-5-formyl-5,6,7,8-tetrahydrofolate pocket.

This sequence belongs to the TRAFAC class TrmE-Era-EngA-EngB-Septin-like GTPase superfamily. TrmE GTPase family. In terms of assembly, homodimer. Heterotetramer of two MnmE and two MnmG subunits. It depends on K(+) as a cofactor.

It localises to the cytoplasm. Its function is as follows. Exhibits a very high intrinsic GTPase hydrolysis rate. Involved in the addition of a carboxymethylaminomethyl (cmnm) group at the wobble position (U34) of certain tRNAs, forming tRNA-cmnm(5)s(2)U34. In Synechococcus sp. (strain RCC307), this protein is tRNA modification GTPase MnmE.